A 284-amino-acid polypeptide reads, in one-letter code: NAD kinase (284 aa).

The active-site Proton acceptor is the aspartate 70. Residues 70–71 (DG), 139–140 (NE), lysine 167, aspartate 169, leucine 177, 180–185 (TAYNLS), and glutamine 236 contribute to the NAD(+) site.

The protein belongs to the NAD kinase family. A divalent metal cation serves as cofactor.

It is found in the cytoplasm. The enzyme catalyses NAD(+) + ATP = ADP + NADP(+) + H(+). In terms of biological role, involved in the regulation of the intracellular balance of NAD and NADP, and is a key enzyme in the biosynthesis of NADP. Catalyzes specifically the phosphorylation on 2'-hydroxyl of the adenosine moiety of NAD to yield NADP. The chain is NAD kinase from Helicobacter pylori (strain G27).